We begin with the raw amino-acid sequence, 256 residues long: Hydroxyacylglutathione hydrolase (256 aa).

His57, His59, Asp61, His62, His115, Asp134, and His172 together coordinate Zn(2+).

Belongs to the metallo-beta-lactamase superfamily. Glyoxalase II family. Monomer. It depends on Zn(2+) as a cofactor.

The enzyme catalyses an S-(2-hydroxyacyl)glutathione + H2O = a 2-hydroxy carboxylate + glutathione + H(+). Its pathway is secondary metabolite metabolism; methylglyoxal degradation; (R)-lactate from methylglyoxal: step 2/2. Thiolesterase that catalyzes the hydrolysis of S-D-lactoyl-glutathione to form glutathione and D-lactic acid. This chain is Hydroxyacylglutathione hydrolase, found in Rhizobium meliloti (strain 1021) (Ensifer meliloti).